Consider the following 353-residue polypeptide: MTIALGKLTKEEKDLFDTMDDWLRRDRFIFVGWSGLLLFPCAYFALGGWFTGTTFVTSWYTHGLASSYLEGCNFLTAAVSTPANSLAHSLLFLWGPEAQGDFTRWCQLGGLWTFVALHGAFGLIGFMLRQFELARSVQLRPYNAIAFSAPIAVFVSVFFIYPLGQSGWFFAPSFGVAAIFRFIRFFQGFHNWTLNPFHMMGVAGVLGAALLCAIHGATVENTLFEDGDGANTFRAFNPTQSEETYSMVTANRFWSQIFGVAFSNKRWLHFFMLFVPVTGLWMSALGVVGLALNLRAYDFVSQEIRAAEDPEFETFYTKNILLNEGIRAWMAAQDQPHENLIFPEEVLPRGNAL.

Residue Thr2 is modified to N-acetylthreonine. Thr2 carries the phosphothreonine modification. A helical membrane pass occupies residues 41–61 (CAYFALGGWFTGTTFVTSWYT). Residue His118 participates in chlorophyll a binding. Residues 125–141 (GFMLRQFELARSVQLRP) traverse the membrane as a helical segment. Pheophytin a-binding residues include Gln130 and Asn143. Residues 153–166 (VFVSVFFIYPLGQS) form a helical membrane-spanning segment. His198 serves as a coordination point for chlorophyll a. The chain crosses the membrane as a helical span at residues 208–228 (AALLCAIHGATVENTLFEDGD). A plastoquinone contacts are provided by His215 and Phe262. Position 215 (His215) interacts with Fe cation. His269 is a Fe cation binding site. A helical transmembrane segment spans residues 279–295 (GLWMSALGVVGLALNLR).

This sequence belongs to the reaction center PufL/M/PsbA/D family. In terms of assembly, PSII is composed of 1 copy each of membrane proteins PsbA, PsbB, PsbC, PsbD, PsbE, PsbF, PsbH, PsbI, PsbJ, PsbK, PsbL, PsbM, PsbT, PsbX, PsbY, PsbZ, Psb30/Ycf12, at least 3 peripheral proteins of the oxygen-evolving complex and a large number of cofactors. It forms dimeric complexes. It depends on The D1/D2 heterodimer binds P680, chlorophylls that are the primary electron donor of PSII, and subsequent electron acceptors. It shares a non-heme iron and each subunit binds pheophytin, quinone, additional chlorophylls, carotenoids and lipids. There is also a Cl(-1) ion associated with D1 and D2, which is required for oxygen evolution. The PSII complex binds additional chlorophylls, carotenoids and specific lipids. as a cofactor.

Its subcellular location is the plastid membrane. It carries out the reaction 2 a plastoquinone + 4 hnu + 2 H2O = 2 a plastoquinol + O2. Its function is as follows. Photosystem II (PSII) is a light-driven water:plastoquinone oxidoreductase that uses light energy to abstract electrons from H(2)O, generating O(2) and a proton gradient subsequently used for ATP formation. It consists of a core antenna complex that captures photons, and an electron transfer chain that converts photonic excitation into a charge separation. The D1/D2 (PsbA/PsbD) reaction center heterodimer binds P680, the primary electron donor of PSII as well as several subsequent electron acceptors. D2 is needed for assembly of a stable PSII complex. This is Photosystem II D2 protein from Cuscuta exaltata (Tall dodder).